We begin with the raw amino-acid sequence, 141 residues long: Hemoglobin subunit alpha (141 aa).

Residues 1–141 (VLSPADKTNV…VSTVLTSKYR (141 aa)) enclose the Globin domain. The residue at position 3 (serine 3) is a Phosphoserine. N6-succinyllysine is present on lysine 7. Residue threonine 8 is modified to Phosphothreonine. Lysine 11 bears the N6-succinyllysine mark. Lysine 16 is subject to N6-acetyllysine; alternate. Lysine 16 carries the N6-succinyllysine; alternate modification. Phosphotyrosine is present on tyrosine 24. A Phosphoserine modification is found at serine 35. Lysine 40 bears the N6-succinyllysine mark. The residue at position 49 (serine 49) is a Phosphoserine. Histidine 58 provides a ligand contact to O2. Position 87 (histidine 87) interacts with heme b. Position 102 is a phosphoserine (serine 102). Threonine 108 carries the post-translational modification Phosphothreonine. Serine 124 bears the Phosphoserine mark. A phosphothreonine mark is found at threonine 134 and threonine 137. Serine 138 carries the post-translational modification Phosphoserine.

It belongs to the globin family. As to quaternary structure, heterotetramer of two alpha chains and two beta chains. As to expression, red blood cells.

Its function is as follows. Involved in oxygen transport from the lung to the various peripheral tissues. The polypeptide is Hemoglobin subunit alpha (Tamias merriami (Merriam's chipmunk)).